Reading from the N-terminus, the 162-residue chain is Peptidyl-prolyl cis-trans isomerase (162 aa).

A PPIase cyclophilin-type domain is found at 5 to 161 (FFDVIANGQP…ARIVIDKCGT (157 aa)).

Belongs to the cyclophilin-type PPIase family. PPIase A subfamily.

The protein localises to the cytoplasm. The enzyme catalyses [protein]-peptidylproline (omega=180) = [protein]-peptidylproline (omega=0). Binds cyclosporin A (CsA). CsA mediates some of its effects via an inhibitory action on PPIase. Its function is as follows. PPIases accelerate the folding of proteins. It catalyzes the cis-trans isomerization of proline imidic peptide bonds in oligopeptides. This chain is Peptidyl-prolyl cis-trans isomerase (ppi1), found in Schizosaccharomyces pombe (strain 972 / ATCC 24843) (Fission yeast).